Reading from the N-terminus, the 200-residue chain is Glycerol-3-phosphate acyltransferase (200 aa).

A run of 5 helical transmembrane segments spans residues 2–22 (FNIS…AVIV), 51–71 (KAAA…VLLA), 84–104 (AIAA…FFGF), 114–134 (LGVL…IWLV), and 159–179 (FFMP…LVLF).

Belongs to the PlsY family. Probably interacts with PlsX.

The protein resides in the cell inner membrane. The catalysed reaction is an acyl phosphate + sn-glycerol 3-phosphate = a 1-acyl-sn-glycero-3-phosphate + phosphate. It participates in lipid metabolism; phospholipid metabolism. Functionally, catalyzes the transfer of an acyl group from acyl-phosphate (acyl-PO(4)) to glycerol-3-phosphate (G3P) to form lysophosphatidic acid (LPA). This enzyme utilizes acyl-phosphate as fatty acyl donor, but not acyl-CoA or acyl-ACP. The polypeptide is Glycerol-3-phosphate acyltransferase (Neisseria meningitidis serogroup C (strain 053442)).